Here is a 507-residue protein sequence, read N- to C-terminus: Dolichyl pyrophosphate Man9GlcNAc2 alpha-1,3-glucosyltransferase (507 aa).

At 1–3 (MEK) the chain is on the cytoplasmic side. A helical transmembrane segment spans residues 4 to 24 (WSLMTITVLLALTVRWTVSLG). The Lumenal portion of the chain corresponds to 25-114 (SYSGAGKPPM…SQSHKLFMRT (90 aa)). Residue Asn59 is glycosylated (N-linked (GlcNAc...) asparagine). The helical transmembrane segment at 115-135 (TVFVADLLIYIPAVILYCCSL) threads the bilayer. The Cytoplasmic segment spans residues 136 to 143 (KETSTKKK). A helical transmembrane segment spans residues 144 to 164 (VSSALCILLYPGLILIDHGHF). Topologically, residues 165–168 (QYNS) are lumenal. The helical transmembrane segment at 169–189 (VSLGFALWGVLCLSYDWDLLG) threads the bilayer. At 190–226 (SAAFCLALNYKQMELYHSLPFFCYLLGKCFKKGLKGK) the chain is on the cytoplasmic side. The helical transmembrane segment at 227 to 247 (GLLLLIKLAGTVVASFAVCWL) threads the bilayer. The Lumenal segment spans residues 248 to 297 (PFCTDVEQIMQVLRRLFPIDRGLFEDKVANIWCSLSVLIKIKNVVSPQTQ). The helical transmembrane segment at 298-318 (LKLSFAVTFLSLLPTCIKLTV) threads the bilayer. Topologically, residues 319–338 (QPSLRGFKLTLVSCALSFFL) are cytoplasmic. The helical transmembrane segment at 339 to 359 (FSFQVHEKSILLVSVPVCLII) threads the bilayer. The Lumenal segment spans residues 360-361 (NE). Residues 362-382 (VPFMATWFLLVSTFSMLPLLL) form a helical membrane-spanning segment. The Cytoplasmic segment spans residues 383-387 (KDGLL). A helical transmembrane segment spans residues 388 to 408 (LPYAVTTLAFLSACVASFAIF). The Lumenal segment spans residues 409 to 441 (EKTSAKDLQLKPFSQSLRGYVSWFKLFPKIVRS). The helical transmembrane segment at 442–462 (LFLLSVTLMGVLSVMSAAVHP) threads the bilayer. At 463–473 (PQRFPDLFPVS) the chain is on the cytoplasmic side. The helical transmembrane segment at 474-494 (VSSISCLHFLFFLVYFNVIIL) threads the bilayer. Residues 495-507 (WDSKNSRNQKKVS) are Lumenal-facing.

Belongs to the ALG6/ALG8 glucosyltransferase family.

The protein resides in the endoplasmic reticulum membrane. The enzyme catalyses an alpha-D-Man-(1-&gt;2)-alpha-D-Man-(1-&gt;2)-alpha-D-Man-(1-&gt;3)-[alpha-D-Man-(1-&gt;2)-alpha-D-Man-(1-&gt;3)-[alpha-D-Man-(1-&gt;2)-alpha-D-Man-(1-&gt;6)]-alpha-D-Man-(1-&gt;6)]-beta-D-Man-(1-&gt;4)-beta-D-GlcNAc-(1-&gt;4)-alpha-D-GlcNAc-diphospho-di-trans,poly-cis-dolichol + a di-trans,poly-cis-dolichyl beta-D-glucosyl phosphate = an alpha-D-Glc-(1-&gt;3)-alpha-D-Man-(1-&gt;2)-alpha-D-Man-(1-&gt;2)-alpha-D-Man-(1-&gt;3)-[alpha-D-Man-(1-&gt;2)-alpha-D-Man-(1-&gt;3)-[alpha-D-Man-(1-&gt;2)-alpha-D-Man-(1-&gt;6)]-alpha-D-Man-(1-&gt;6)]-beta-D-Man-(1-&gt;4)-beta-D-GlcNAc-(1-&gt;4)-alpha-D-GlcNAc-diphospho-di-trans,poly-cis-dolichol + a di-trans,poly-cis-dolichyl phosphate + H(+). It participates in protein modification; protein glycosylation. Dolichyl pyrophosphate Man9GlcNAc2 alpha-1,3-glucosyltransferase that operates in the biosynthetic pathway of dolichol-linked oligosaccharides, the glycan precursors employed in protein asparagine (N)-glycosylation. The assembly of dolichol-linked oligosaccharides begins on the cytosolic side of the endoplasmic reticulum membrane and finishes in its lumen. The sequential addition of sugars to dolichol pyrophosphate produces dolichol-linked oligosaccharides containing fourteen sugars, including two GlcNAcs, nine mannoses and three glucoses. Once assembled, the oligosaccharide is transferred from the lipid to nascent proteins by oligosaccharyltransferases. In the lumen of the endoplasmic reticulum, adds the first glucose residue from dolichyl phosphate glucose (Dol-P-Glc) onto the lipid-linked oligosaccharide intermediate Man(9)GlcNAc(2)-PP-Dol to produce Glc(1)Man(9)GlcNAc(2)-PP-Dol. Glc(1)Man(9)GlcNAc(2)-PP-Dol is a substrate for ALG8, the following enzyme in the biosynthetic pathway. The polypeptide is Dolichyl pyrophosphate Man9GlcNAc2 alpha-1,3-glucosyltransferase (Gallus gallus (Chicken)).